The primary structure comprises 524 residues: Glucose-6-phosphate isomerase (524 aa).

The Proton donor role is filled by Glu346. Active-site residues include His377 and Lys492.

It belongs to the GPI family.

The protein resides in the cytoplasm. It catalyses the reaction alpha-D-glucose 6-phosphate = beta-D-fructose 6-phosphate. Its pathway is carbohydrate biosynthesis; gluconeogenesis. The protein operates within carbohydrate degradation; glycolysis; D-glyceraldehyde 3-phosphate and glycerone phosphate from D-glucose: step 2/4. Catalyzes the reversible isomerization of glucose-6-phosphate to fructose-6-phosphate. The polypeptide is Glucose-6-phosphate isomerase (Chlamydia muridarum (strain MoPn / Nigg)).